Reading from the N-terminus, the 403-residue chain is Probable N-acetyltransferase HLS1 (403 aa).

Residues 2-177 (TVVREYDPTR…VNPVYAHRVN (176 aa)) form the N-acetyltransferase domain.

The protein belongs to the acetyltransferase family.

Its function is as follows. Ethylene-responsive N-acetyltransferase required for differential cell elongation in the hypocotyl. Regulates apical hook formation of dark-grown seedlings. May control differential cell growth by regulating auxin activity. May be involved in negative feedback regulation of auxin homeostasis through the control of GH3-like genes. Modulates de novo shoot organogenesis. The chain is Probable N-acetyltransferase HLS1 (HLS1) from Arabidopsis thaliana (Mouse-ear cress).